The following is a 145-amino-acid chain: Bacilliredoxin SERP1075 (145 aa).

This sequence belongs to the bacilliredoxin family.

The protein is Bacilliredoxin SERP1075 of Staphylococcus epidermidis (strain ATCC 35984 / DSM 28319 / BCRC 17069 / CCUG 31568 / BM 3577 / RP62A).